The following is a 308-amino-acid chain: MKPRIVYRPLHGILLLDKPSGLSSNNALQAARRLLRAEKGGHTGSLDPLATGLLPLCFGEATKIAGLLLGSAKAYDAEIVLGVTTDTDDADGESLRERAVPDLSEADLQAALAPFIGRIQQQAPIYSALKQGGEPLYAKARRGERIEAPVREVDVQAIEVLGYGAPRLRLRVTCGSGTYIRSLARDLGEALGCGAHIASLRRLWVEPFRAPQMITLEALSAVLEAGAEAQTLLLPIEAGLADFARIVLDQTRAARFRMGQRLRDAAFPTGQVAVFGPDGTPSGLGLVDADGRLSPQRLFNGLNEIPAC.

Residue aspartate 47 is the Nucleophile of the active site.

The protein belongs to the pseudouridine synthase TruB family. Type 1 subfamily.

It carries out the reaction uridine(55) in tRNA = pseudouridine(55) in tRNA. Functionally, responsible for synthesis of pseudouridine from uracil-55 in the psi GC loop of transfer RNAs. The chain is tRNA pseudouridine synthase B from Xanthomonas axonopodis pv. citri (strain 306).